Reading from the N-terminus, the 303-residue chain is Glycosyltransferase AglJ (303 aa).

2 consecutive transmembrane segments (helical) span residues 230–250 (FYFG…ALYV) and 263–283 (VIAV…MFGV).

This sequence belongs to the glycosyltransferase 2 family.

The protein resides in the cell membrane. Its pathway is cell surface structure biogenesis; S-layer biogenesis. Functionally, involved in the assembly of a N-linked pentasaccharide that decorates the S-layer glycoprotein and flagellins. Adds the first hexose subunit of the pentasaccharide to the dolichol phosphate carrier. The sequence is that of Glycosyltransferase AglJ (aglJ) from Haloferax volcanii (strain ATCC 29605 / DSM 3757 / JCM 8879 / NBRC 14742 / NCIMB 2012 / VKM B-1768 / DS2) (Halobacterium volcanii).